A 220-amino-acid polypeptide reads, in one-letter code: MKKVLITGFEPFGGDSKNPTEQIAKYFDRKQIGNAMVYGRVLPVSVKRATIELKRYLEEIKPEIVINLGLAPTYSNITVERIAVNIIDARIPDNDGYQPIDEKIEEDAPLAYMATLPVRAITKTLRDNGIPATISYSAGTYLCNYVMFKTLHFSKIEGYPLKAGFIHVPYTPDQVVNKFFLLGKNTPSMCLEAEIKAIELAVKVSLDYLEKDRDDIKIPL.

Active-site residues include E80, C143, and H167.

This sequence belongs to the peptidase C15 family. As to quaternary structure, homotetramer.

Its subcellular location is the cytoplasm. The catalysed reaction is Release of an N-terminal pyroglutamyl group from a polypeptide, the second amino acid generally not being Pro.. Its function is as follows. Removes 5-oxoproline from various penultimate amino acid residues except L-proline. This is Pyrrolidone-carboxylate peptidase (pcp) from Thermococcus litoralis (strain ATCC 51850 / DSM 5473 / JCM 8560 / NS-C).